The chain runs to 339 residues: Deubiquitinase and deneddylase Dub2 (339 aa).

Residues 36–56 (IIIALFLIVISCGLILCAYTF) traverse the membrane as a helical segment. Catalysis depends on residues His-203, Asp-220, and Cys-282.

It belongs to the peptidase C48 family.

The protein localises to the secreted. Its subcellular location is the host cell. It is found in the membrane. In terms of biological role, effector proteins function to alter host cell physiology and promote bacterial survival in host tissues. This protease possesses deubiquitinating and deneddylating activities. The chain is Deubiquitinase and deneddylase Dub2 (cdu2) from Chlamydia trachomatis serovar L2 (strain ATCC VR-902B / DSM 19102 / 434/Bu).